Consider the following 550-residue polypeptide: Zinc finger protein 426 (550 aa).

In terms of domain architecture, KRAB spans 39–110; the sequence is VSFEDVIVDF…KIVFPEWKLQ (72 aa). 11 C2H2-type zinc fingers span residues 219–241, 274–296, 302–324, 330–352, 358–380, 386–408, 414–436, 442–464, 470–492, 498–522, and 528–550; these read FECS…QRTH, HRCK…MRTH, YECK…GRTH, YVCS…VRSH, YGCK…IRTH, FVCV…LKLH, CECK…MRTH, YTCK…MRIH, YECK…ERTH, YECK…SHTH, and YKCQ…ERIH.

Its subcellular location is the nucleus. Its function is as follows. May be involved in transcriptional regulation. In Mus musculus (Mouse), this protein is Zinc finger protein 426 (Znf426).